A 683-amino-acid chain; its full sequence is MSSCVNTSQTGPKKKISFIIRDEHEYSNRSAVSALQYDAQNGRLFTGGSDTIIRTWSVPHHKDAFSARGGVRSPGKNSPVQYQGSLEQHTDWVNDMILCGHGKILISASNDTTVKVWNIERDNKHGFIDCIRTHKDYVSCLAYAPIVEKAVSASFDHNIFVYDINANFKTVNNLIGCKDSIYSLATTPNLSLVLGAGTEKCIRLFDPRTNEKIMKLRGHTDNVRALVVNDDGTRALSAGSDATIRLWDIGQQRCIATCIAHEEGVWTLQVDSSFTTVYSAGKDKMVVKTPLYDFTKSQLLFKEEAPVKKLLLSEKDNPVSLWVGTWKSDIKRWSIRPSAQLSIGGDEDGPSTSNANHSVSASSSPPVTFKYIRVKDQKGQQSTPELVIPGAPAIKKHAMLSDKRHVLTRDSDGNVALYDVLAARKIKDYGKRIFEEVVDENSRQVYIPSWFVVDSKSGMLQITLDELDALSSWLSSKDAGFDDNDRETKLNYGGMMLRSLFERWPPCKMTNVDAADADDVQKATLNFISLPEHTPLIICEGNGRPLYRLLVGDAGKEFEANELAQIAPMWVIDAIERNQLPKFNKMPFYLLPHPSTNPKQPKKDRLSATEMLQVKKVMEHVYEKILSTNDDITVGSIPLNQIHTKMEMYCNDQRLEPDMDLRTVKHLYWKQSGELLLHYKPVK.

7 WD repeats span residues 27–82 (SNRS…PVQY), 88–130 (QHTD…FIDC), 133–167 (THKD…INAN), 176–215 (GCKD…KIMK), 218–257 (GHTD…CIAT), 260–299 (AHEE…KSQL), and 302–343 (KEEA…QLSI). The interval 341–364 (LSIGGDEDGPSTSNANHSVSASSS) is disordered. Low complexity predominate over residues 351–364 (STSNANHSVSASSS). One copy of the WD 8 repeat lies at 389–428 (PGAPAIKKHAMLSDKRHVLTRDSDGNVALYDVLAARKIKD).

The protein belongs to the WD repeat WDR48 family. In terms of assembly, interacts with usp-46; the interaction increases the catalytic activity of usp-46 in the presence of wdr-20. As to expression, expressed in several head neurons and cells in the tail including the anal depressor cell.

Together with wdr-20, binds to and stimulates the activity of the deubiquitinating enzyme usp-46, leading to deubiquitination and stabilization of the glr-1 glutamate receptor. In Caenorhabditis elegans, this protein is WD repeat-containing protein 48 homolog (wdr-48).